Reading from the N-terminus, the 139-residue chain is Endoribonuclease YbeY (139 aa).

His110, His114, and His120 together coordinate Zn(2+).

The protein belongs to the endoribonuclease YbeY family. Zn(2+) serves as cofactor.

It is found in the cytoplasm. In terms of biological role, single strand-specific metallo-endoribonuclease involved in late-stage 70S ribosome quality control and in maturation of the 3' terminus of the 16S rRNA. The sequence is that of Endoribonuclease YbeY from Thermus thermophilus (strain ATCC BAA-163 / DSM 7039 / HB27).